The primary structure comprises 64 residues: Beta-insect excitatory toxin OdTx12 (64 aa).

The LCN-type CS-alpha/beta domain occupies 1 to 59 (QSTGGKAPECLLSNYCNNECTKVHYADKGYCCLLSCYCFGLSDDKKVLEISDSRKKYCD). 4 disulfide bridges follow: Cys-10–Cys-31, Cys-16–Cys-36, Cys-20–Cys-38, and Cys-32–Cys-58.

Belongs to the long (4 C-C) scorpion toxin superfamily. Sodium channel inhibitor family. Beta subfamily. As to expression, expressed by the venom gland.

The protein resides in the secreted. Its function is as follows. Excitatory insect beta-toxins induce a spastic paralysis. They bind voltage-independently at site-4 of sodium channels (Nav) and shift the voltage of activation toward more negative potentials thereby affecting sodium channel activation and promoting spontaneous and repetitive firing. In vivo, this recombinant protein is lethal to Locusta migratoria larvae after injection, but has no significant effect when orally administered. Is not toxic to mice after intracerebroventricular injection. This is Beta-insect excitatory toxin OdTx12 from Odontobuthus doriae (Yellow Iranian scorpion).